A 368-amino-acid chain; its full sequence is F-box/kelch-repeat protein At5g51250 (368 aa).

The F-box domain maps to Met1–Arg44. 3 Kelch repeats span residues Asp116–Arg163, Ile165–Gly218, and Leu260–Lys304.

This Arabidopsis thaliana (Mouse-ear cress) protein is F-box/kelch-repeat protein At5g51250.